A 905-amino-acid polypeptide reads, in one-letter code: DNA mismatch repair protein MutS (905 aa).

Residues 272-292 (KKPPLSPPSREATGSTMAIDP) are disordered. 654-661 (GPNMAGKS) lines the ATP pocket.

This sequence belongs to the DNA mismatch repair MutS family.

In terms of biological role, this protein is involved in the repair of mismatches in DNA. It is possible that it carries out the mismatch recognition step. This protein has a weak ATPase activity. In Rhodopseudomonas palustris (strain BisB18), this protein is DNA mismatch repair protein MutS.